Here is a 507-residue protein sequence, read N- to C-terminus: MVTLKADEISNIIRERIEQYNREVKIVNTGTVLQVGDGIARIYGLDEVMAGELVEFEEGTIGIALNLESNNVGVVLMGDGLMIQEGSSVKATGKIAQIPVSEAYLGRVINALANPIDGRGKISASESRLIESPAPGIISRRSVYEPLQTGLIAIDSMIPIGRGQRELIIGDRQTGKTAVATDTILNQQGQNVICVYVAIGQKASSVAQVVTSLQERGAMEYTIVVAETADSPATLQYLAPYTGAALAEYFMYREQHTLIIYDDLSKQAQAYRQMSLLLRRPPGREAYPGDVFYLHSRLLERAAKLSSQLGEGSMTALPIVETQSGDVSAYIPTNVISITDGQIFLSADLFNAGIRPAINVGISVSRVGSAAQIKAMKQVAGKLKLELAQFAELEAFAQFSSDLDKATQNQLARGQRLRELLKQSQSAPLTVEEQIMTIYTGTNGYLDGLEIGQVRKFLVQLRTYLKTNKPQFQEIISSTKTLTDEAESVLKEGIQEQLERFLLQEKL.

170–177 serves as a coordination point for ATP; the sequence is GDRQTGKT. The residue at position 257 (Thr-257) is a Phosphothreonine.

Belongs to the ATPase alpha/beta chains family. In terms of assembly, F-type ATPases have 2 components, CF(1) - the catalytic core - and CF(0) - the membrane proton channel. CF(1) has five subunits: alpha(3), beta(3), gamma(1), delta(1), epsilon(1). CF(0) has four main subunits: a, b, b' and c.

It is found in the plastid. The protein resides in the chloroplast thylakoid membrane. The catalysed reaction is ATP + H2O + 4 H(+)(in) = ADP + phosphate + 5 H(+)(out). Its function is as follows. Produces ATP from ADP in the presence of a proton gradient across the membrane. The alpha chain is a regulatory subunit. In Aethionema grandiflorum (Persian stone-cress), this protein is ATP synthase subunit alpha, chloroplastic.